Here is a 66-residue protein sequence, read N- to C-terminus: Small ribosomal subunit protein bS21A (66 aa).

The span at 34–46 shows a compositional bias: basic residues; it reads KHYEKPSVKKKRK. Residues 34–66 are disordered; that stretch reads KHYEKPSVKKKRKQMEAERKRRKAQRFRKPDRD.

This sequence belongs to the bacterial ribosomal protein bS21 family.

This is Small ribosomal subunit protein bS21A from Geobacter sulfurreducens (strain ATCC 51573 / DSM 12127 / PCA).